The primary structure comprises 155 residues: S-ribosylhomocysteine lyase (155 aa).

The Fe cation site is built by His57, His61, and Cys124.

The protein belongs to the LuxS family. In terms of assembly, homodimer. Fe cation is required as a cofactor.

The enzyme catalyses S-(5-deoxy-D-ribos-5-yl)-L-homocysteine = (S)-4,5-dihydroxypentane-2,3-dione + L-homocysteine. Involved in the synthesis of autoinducer 2 (AI-2) which is secreted by bacteria and is used to communicate both the cell density and the metabolic potential of the environment. The regulation of gene expression in response to changes in cell density is called quorum sensing. Catalyzes the transformation of S-ribosylhomocysteine (RHC) to homocysteine (HC) and 4,5-dihydroxy-2,3-pentadione (DPD). In Listeria monocytogenes serotype 4a (strain HCC23), this protein is S-ribosylhomocysteine lyase.